A 164-amino-acid polypeptide reads, in one-letter code: Ribosome maturation factor RimM (164 aa).

One can recognise a PRC barrel domain in the interval 92 to 164 (PDSEYYVANL…FVVIVPPEFI (73 aa)).

The protein belongs to the RimM family. Binds ribosomal protein uS19.

It is found in the cytoplasm. In terms of biological role, an accessory protein needed during the final step in the assembly of 30S ribosomal subunit, possibly for assembly of the head region. Essential for efficient processing of 16S rRNA. May be needed both before and after RbfA during the maturation of 16S rRNA. It has affinity for free ribosomal 30S subunits but not for 70S ribosomes. The sequence is that of Ribosome maturation factor RimM from Orientia tsutsugamushi (strain Ikeda) (Rickettsia tsutsugamushi).